A 145-amino-acid chain; its full sequence is Transcriptional regulator MraZ (145 aa).

SpoVT-AbrB domains lie at 7–54 (NATN…GPDL) and 83–126 (GVFM…QPQA).

The protein belongs to the MraZ family. As to quaternary structure, forms oligomers.

Its subcellular location is the cytoplasm. It is found in the nucleoid. This Rhizobium johnstonii (strain DSM 114642 / LMG 32736 / 3841) (Rhizobium leguminosarum bv. viciae) protein is Transcriptional regulator MraZ.